The primary structure comprises 712 residues: Polyribonucleotide nucleotidyltransferase (712 aa).

Positions 487 and 493 each coordinate Mg(2+). Residues 554–613 (PRIEVMNIPVDKIREVIGSGGKVIREIVEKTGAKINIEDDGTVKIASSSGKEIEAARKWI) enclose the KH domain. In terms of domain architecture, S1 motif spans 623–691 (GQIYEGTVVK…ERGKVRLSMK (69 aa)).

The protein belongs to the polyribonucleotide nucleotidyltransferase family. Mg(2+) is required as a cofactor.

It is found in the cytoplasm. It catalyses the reaction RNA(n+1) + phosphate = RNA(n) + a ribonucleoside 5'-diphosphate. Functionally, involved in mRNA degradation. Catalyzes the phosphorolysis of single-stranded polyribonucleotides processively in the 3'- to 5'-direction. This chain is Polyribonucleotide nucleotidyltransferase, found in Rhizobium leguminosarum bv. trifolii (strain WSM2304).